Here is a 366-residue protein sequence, read N- to C-terminus: MVYYDLNIDSSLPEPKIKSMLSLHTKYGYDSVAITHTVEGKIGYKDVCKIKKIQIEDDSEKSTSSGWMKMGDSNKTIKQYTRLQVICKTMAEFQMITANNPVVQSYDIISVVPYDVSVFNAACNSNEIDIITIDTFSKFIIKPERVRQCIAKGIFIEILYGNLFGIDADRIAFFQIASSLVRSSFGKNIILSSSGKSSTTLRSPYDLSNLGHLFGLTFDQAKAAVSKHPHTAVLHAITRRTKGIATVTDPNLLKDLELWKLERKEDTQPTNNNIPHEKHINKESTGKETIPKPTTTTTTTTTTTTTAKTKTPTPTPTTEKTPSIPTQPPQKPTAKSNKKTTTNTTSTAQKQGKMDIDIDNNKRKRE.

The interval 265–366 (EDTQPTNNNI…DIDNNKRKRE (102 aa)) is disordered. Positions 275–290 (PHEKHINKESTGKETI) are enriched in basic and acidic residues. 2 stretches are compositionally biased toward low complexity: residues 291–324 (PKPTTTTTTTTTTTTTAKTKTPTPTPTTEKTPSI) and 333–351 (TAKSNKKTTTNTTSTAQKQ). The span at 352–366 (GKMDIDIDNNKRKRE) shows a compositional bias: basic and acidic residues.

It belongs to the eukaryotic/archaeal RNase P protein component 3 family.

It is found in the nucleus. The catalysed reaction is Endonucleolytic cleavage of RNA, removing 5'-extranucleotides from tRNA precursor.. Component of ribonuclease P, a protein complex that generates mature tRNA molecules by cleaving their 5'-ends. This is Ribonuclease P protein subunit drpp30 (drpp30) from Dictyostelium discoideum (Social amoeba).